A 101-amino-acid polypeptide reads, in one-letter code: Small ribosomal subunit protein bS18c (101 aa).

It belongs to the bacterial ribosomal protein bS18 family. Part of the 30S ribosomal subunit.

Its subcellular location is the plastid. The protein resides in the chloroplast. This chain is Small ribosomal subunit protein bS18c, found in Aethionema grandiflorum (Persian stone-cress).